Here is a 364-residue protein sequence, read N- to C-terminus: Phosphoserine aminotransferase (364 aa).

Arginine 46 provides a ligand contact to L-glutamate. Pyridoxal 5'-phosphate is bound by residues 80 to 81, tryptophan 106, threonine 157, aspartate 176, and glutamine 199; that span reads AR. The residue at position 200 (lysine 200) is an N6-(pyridoxal phosphate)lysine. 241–242 is a pyridoxal 5'-phosphate binding site; it reads NT.

This sequence belongs to the class-V pyridoxal-phosphate-dependent aminotransferase family. SerC subfamily. As to quaternary structure, homodimer. Pyridoxal 5'-phosphate is required as a cofactor.

It localises to the cytoplasm. It catalyses the reaction O-phospho-L-serine + 2-oxoglutarate = 3-phosphooxypyruvate + L-glutamate. The catalysed reaction is 4-(phosphooxy)-L-threonine + 2-oxoglutarate = (R)-3-hydroxy-2-oxo-4-phosphooxybutanoate + L-glutamate. It participates in amino-acid biosynthesis; L-serine biosynthesis; L-serine from 3-phospho-D-glycerate: step 2/3. It functions in the pathway cofactor biosynthesis; pyridoxine 5'-phosphate biosynthesis; pyridoxine 5'-phosphate from D-erythrose 4-phosphate: step 3/5. Functionally, catalyzes the reversible conversion of 3-phosphohydroxypyruvate to phosphoserine and of 3-hydroxy-2-oxo-4-phosphonooxybutanoate to phosphohydroxythreonine. This chain is Phosphoserine aminotransferase, found in Vibrio vulnificus (strain YJ016).